The primary structure comprises 440 residues: 23S rRNA (uracil(1939)-C(5))-methyltransferase RlmD (440 aa).

One can recognise a TRAM domain in the interval 11–69 (STLDTKHQPVTIERLDHQGSGLAFLHKKPLFVDGALPGEEVLIQLTENKSKYARGQLIK). The [4Fe-4S] cluster site is built by Cys82, Cys88, Cys91, and Cys169. S-adenosyl-L-methionine-binding residues include Gln272, Phe301, Asn306, Glu322, Asn349, and Asp370. Residue Cys396 is the Nucleophile of the active site.

The protein belongs to the class I-like SAM-binding methyltransferase superfamily. RNA M5U methyltransferase family. RlmD subfamily.

It catalyses the reaction uridine(1939) in 23S rRNA + S-adenosyl-L-methionine = 5-methyluridine(1939) in 23S rRNA + S-adenosyl-L-homocysteine + H(+). Its function is as follows. Catalyzes the formation of 5-methyl-uridine at position 1939 (m5U1939) in 23S rRNA. This Vibrio cholerae serotype O1 (strain M66-2) protein is 23S rRNA (uracil(1939)-C(5))-methyltransferase RlmD.